The primary structure comprises 882 residues: MTEITVEKLATEVGKTVDRLIEQFAQAGIKKAKADTVSESEKQQLLDFLKKQHGADAQPTKMTLQRKTVSTLSVSSGGGQSKDVKVEVRKKRTFVKRDGNEAALKAEEEARAQAEAQAKAEAEAKAKAEAEAKAKADAEAKAKAKAEAEAKAKASASAAKEQPKPVESEEAKAEAARLKSQQEEAAKSKAAQEEAAAKEKARLLAEENAARWAEEERRRIEAERYGDHHVTTSKVARAAEDSADLDDEKRGRRNRNKTQTKSKRGGKDAREGREKHMKYKSTPESMAHGFNKPVAAVTRDVRIGETVTVAELAQKMAVKATEIIKAMMKMGSMVTINQVLDQETAQLVAEEMGHKVVLLRENELEHQVLADRDDEGTTKLEPRAPVVTIMGHVDHGKTSLLDYIRRTKVAAGEAGGITQHIGAYHVETDNGMITFLDTPGHAAFTAMRARGAKATDIVILVVAADDGVMPQTIEAIQHAKAGNVPLIVAVNKMDKPEADIDRVKNELSQHGVMSEDWGGENMFCYVSAKTGQGVDELLEAILLQAEVLELKAVRDGMAAGVVIESQLDKGRGPVATVLVQEGTLRQGDIVLCGLEYGKIRAMKDENGRPIMEAGPSIPVEILGLSGVPSAGDEATVVRDERKAREVALYRQGKFRDVKLARQQKSKLENMFANMTEGEVQELNIVLKADVQGSLEAITDSLRKLSTDEVKVNIIASGVGALTETDATLAAASNAIMVGFNVRADAQARKTIESEAVDLRYYSVIYDLIDEVKSAMSGMLSPEFKQQIIGLAEVRDVFKSPKLGAIAGCMVIEGIVKRSAPIRVLRENVVIYEGELESLRRFKDDVNEVRNGMECGIGVKNYNDVRVGDQIEVFETIEVARTL.

Disordered stretches follow at residues 67 to 202 (KTVS…EKAR) and 223 to 278 (ERYG…KHMK). 2 stretches are compositionally biased toward basic and acidic residues: residues 95–152 (VKRD…EAKA) and 161–202 (EQPK…EKAR). The segment covering 251–264 (GRRNRNKTQTKSKR) has biased composition (basic residues). Residues 265–274 (GGKDAREGRE) are compositionally biased toward basic and acidic residues. The region spanning 382-551 (PRAPVVTIMG…LLQAEVLELK (170 aa)) is the tr-type G domain. The tract at residues 391–398 (GHVDHGKT) is G1. 391–398 (GHVDHGKT) lines the GTP pocket. A G2 region spans residues 416-420 (GITQH). The interval 437–440 (DTPG) is G3. Residues 437-441 (DTPGH) and 491-494 (NKMD) each bind GTP. Positions 491–494 (NKMD) are G4. The segment at 527–529 (SAK) is G5.

The protein belongs to the TRAFAC class translation factor GTPase superfamily. Classic translation factor GTPase family. IF-2 subfamily.

The protein localises to the cytoplasm. One of the essential components for the initiation of protein synthesis. Protects formylmethionyl-tRNA from spontaneous hydrolysis and promotes its binding to the 30S ribosomal subunits. Also involved in the hydrolysis of GTP during the formation of the 70S ribosomal complex. This chain is Translation initiation factor IF-2, found in Shewanella amazonensis (strain ATCC BAA-1098 / SB2B).